The primary structure comprises 415 residues: Histidine--tRNA ligase (415 aa).

Belongs to the class-II aminoacyl-tRNA synthetase family. As to quaternary structure, homodimer.

The protein localises to the cytoplasm. It carries out the reaction tRNA(His) + L-histidine + ATP = L-histidyl-tRNA(His) + AMP + diphosphate + H(+). In Gluconacetobacter diazotrophicus (strain ATCC 49037 / DSM 5601 / CCUG 37298 / CIP 103539 / LMG 7603 / PAl5), this protein is Histidine--tRNA ligase.